The following is a 301-amino-acid chain: Probable tRNA pseudouridine synthase B (301 aa).

The active-site Nucleophile is the aspartate 54. Residues 227 to 301 enclose the PUA domain; that stretch reads LPRLTIADSA…VVVALERVLV (75 aa).

Belongs to the pseudouridine synthase TruB family. Type 2 subfamily.

It carries out the reaction uridine(55) in tRNA = pseudouridine(55) in tRNA. Functionally, could be responsible for synthesis of pseudouridine from uracil-55 in the psi GC loop of transfer RNAs. The sequence is that of Probable tRNA pseudouridine synthase B from Halobacterium salinarum (strain ATCC 29341 / DSM 671 / R1).